We begin with the raw amino-acid sequence, 279 residues long: Oxygen-dependent coproporphyrinogen-III oxidase (279 aa).

Residue S102 participates in substrate binding. H106 and H116 together coordinate a divalent metal cation. H116 acts as the Proton donor in catalysis. Position 118-120 (118-120 (NTR)) interacts with substrate. A divalent metal cation is bound by residues H149 and H179. Residues 244 to 279 (YVEFNLLYDRGTKFGLMTDGNVEAILMSLPPVVKFN) are important for dimerization.

This sequence belongs to the aerobic coproporphyrinogen-III oxidase family. As to quaternary structure, homodimer. Requires a divalent metal cation as cofactor.

It localises to the cytoplasm. The catalysed reaction is coproporphyrinogen III + O2 + 2 H(+) = protoporphyrinogen IX + 2 CO2 + 2 H2O. The protein operates within porphyrin-containing compound metabolism; protoporphyrin-IX biosynthesis; protoporphyrinogen-IX from coproporphyrinogen-III (O2 route): step 1/1. Functionally, involved in the heme biosynthesis. Catalyzes the aerobic oxidative decarboxylation of propionate groups of rings A and B of coproporphyrinogen-III to yield the vinyl groups in protoporphyrinogen-IX. The protein is Oxygen-dependent coproporphyrinogen-III oxidase of Rickettsia prowazekii (strain Madrid E).